The sequence spans 396 residues: Elongation factor Tu 1 (396 aa).

The tr-type G domain occupies 10 to 206 (KPHVNVGTIG…ALDSYIPLPE (197 aa)). The G1 stretch occupies residues 19–26 (GHVDHGKT). 19 to 26 (GHVDHGKT) is a GTP binding site. Residue T26 coordinates Mg(2+). Residues 60–64 (GITIN) form a G2 region. Residues 81-84 (DCPG) form a G3 region. GTP-binding positions include 81–85 (DCPGH) and 136–139 (NKCD). Residues 136–139 (NKCD) are G4. The segment at 174-176 (SAK) is G5.

It belongs to the TRAFAC class translation factor GTPase superfamily. Classic translation factor GTPase family. EF-Tu/EF-1A subfamily. As to quaternary structure, monomer.

It localises to the cytoplasm. The enzyme catalyses GTP + H2O = GDP + phosphate + H(+). In terms of biological role, GTP hydrolase that promotes the GTP-dependent binding of aminoacyl-tRNA to the A-site of ribosomes during protein biosynthesis. In Albidiferax ferrireducens (strain ATCC BAA-621 / DSM 15236 / T118) (Rhodoferax ferrireducens), this protein is Elongation factor Tu 1.